A 191-amino-acid chain; its full sequence is Large ribosomal subunit protein uL5 (191 aa).

Belongs to the universal ribosomal protein uL5 family. As to quaternary structure, part of the 50S ribosomal subunit; part of the 5S rRNA/L5/L18/L25 subcomplex. Contacts the 5S rRNA and the P site tRNA. Forms a bridge to the 30S subunit in the 70S ribosome.

This is one of the proteins that bind and probably mediate the attachment of the 5S RNA into the large ribosomal subunit, where it forms part of the central protuberance. In the 70S ribosome it contacts protein S13 of the 30S subunit (bridge B1b), connecting the 2 subunits; this bridge is implicated in subunit movement. Contacts the P site tRNA; the 5S rRNA and some of its associated proteins might help stabilize positioning of ribosome-bound tRNAs. This chain is Large ribosomal subunit protein uL5, found in Thermobifida fusca (strain YX).